The primary structure comprises 83 residues: ATP synthase subunit c, chloroplastic (83 aa).

A run of 2 helical transmembrane segments spans residues 4-24 (IISA…AIGP) and 57-77 (LAFM…LLFA).

Belongs to the ATPase C chain family. In terms of assembly, F-type ATPases have 2 components, F(1) - the catalytic core - and F(0) - the membrane proton channel. F(1) has five subunits: alpha(3), beta(3), gamma(1), delta(1), epsilon(1). F(0) has four main subunits: a(1), b(1), b'(1) and c(10-14). The alpha and beta chains form an alternating ring which encloses part of the gamma chain. F(1) is attached to F(0) by a central stalk formed by the gamma and epsilon chains, while a peripheral stalk is formed by the delta, b and b' chains.

Its subcellular location is the plastid. The protein resides in the chloroplast thylakoid membrane. F(1)F(0) ATP synthase produces ATP from ADP in the presence of a proton or sodium gradient. F-type ATPases consist of two structural domains, F(1) containing the extramembraneous catalytic core and F(0) containing the membrane proton channel, linked together by a central stalk and a peripheral stalk. During catalysis, ATP synthesis in the catalytic domain of F(1) is coupled via a rotary mechanism of the central stalk subunits to proton translocation. In terms of biological role, key component of the F(0) channel; it plays a direct role in translocation across the membrane. A homomeric c-ring of between 10-14 subunits forms the central stalk rotor element with the F(1) delta and epsilon subunits. This chain is ATP synthase subunit c, chloroplastic, found in Galdieria sulphuraria (Red alga).